A 493-amino-acid chain; its full sequence is Glutamyl-tRNA(Gln) amidotransferase subunit A (493 aa).

Residues K79 and S159 each act as charge relay system in the active site. S183 serves as the catalytic Acyl-ester intermediate.

It belongs to the amidase family. GatA subfamily. Heterotrimer of A, B and C subunits.

It catalyses the reaction L-glutamyl-tRNA(Gln) + L-glutamine + ATP + H2O = L-glutaminyl-tRNA(Gln) + L-glutamate + ADP + phosphate + H(+). Its function is as follows. Allows the formation of correctly charged Gln-tRNA(Gln) through the transamidation of misacylated Glu-tRNA(Gln) in organisms which lack glutaminyl-tRNA synthetase. The reaction takes place in the presence of glutamine and ATP through an activated gamma-phospho-Glu-tRNA(Gln). The polypeptide is Glutamyl-tRNA(Gln) amidotransferase subunit A (Brucella canis (strain ATCC 23365 / NCTC 10854 / RM-666)).